Here is a 436-residue protein sequence, read N- to C-terminus: 5-methylthioadenosine/S-adenosylhomocysteine deaminase (436 aa).

Positions 66 and 68 each coordinate Zn(2+). Substrate-binding residues include glutamate 95, arginine 147, arginine 161, and histidine 187. Histidine 214 contributes to the Zn(2+) binding site. Residues glutamate 217 and aspartate 303 each coordinate substrate. Aspartate 303 is a binding site for Zn(2+).

Belongs to the metallo-dependent hydrolases superfamily. MTA/SAH deaminase family. Requires Zn(2+) as cofactor.

It catalyses the reaction S-adenosyl-L-homocysteine + H2O + H(+) = S-inosyl-L-homocysteine + NH4(+). The enzyme catalyses S-methyl-5'-thioadenosine + H2O + H(+) = S-methyl-5'-thioinosine + NH4(+). Its function is as follows. Catalyzes the deamination of 5-methylthioadenosine and S-adenosyl-L-homocysteine into 5-methylthioinosine and S-inosyl-L-homocysteine, respectively. Is also able to deaminate adenosine. The protein is 5-methylthioadenosine/S-adenosylhomocysteine deaminase of Symbiobacterium thermophilum (strain DSM 24528 / JCM 14929 / IAM 14863 / T).